Reading from the N-terminus, the 64-residue chain is Translation machinery-associated protein 7 homolog (64 aa).

The interval 1-64 (MSGRQGGKAK…GGGIKKSGKK (64 aa)) is disordered. The stretch at 21-50 (DLSEEDVEFKKKQQEEAKKIKEMAAKAGQR) forms a coiled coil. Positions 28 to 44 (EFKKKQQEEAKKIKEMA) are enriched in basic and acidic residues. Over residues 53–64 (LLGGGIKKSGKK) the composition is skewed to gly residues.

This sequence belongs to the TMA7 family.

The sequence is that of Translation machinery-associated protein 7 homolog from Caenorhabditis briggsae.